The chain runs to 994 residues: Translation initiation factor IF-2 (994 aa).

2 stretches are compositionally biased toward polar residues: residues 1 to 10 (MSDENNNGRN) and 28 to 40 (SVSS…SFSH). A disordered region spans residues 1–405 (MSDENNNGRN…REKRKGGAQE (405 aa)). Low complexity predominate over residues 76-91 (PQKPAGPAQAPRAPQG). Basic and acidic residues predominate over residues 98–131 (AEERAARQRAIELARQQEADRRAREERARAEAEA). A compositionally biased stretch (low complexity) spans 132-146 (ARAAQQKAAQAAAEP). Over residues 147 to 157 (PAAPPPAPAAP) the composition is skewed to pro residues. A compositionally biased stretch (low complexity) spans 158–172 (PAAAAPAAPAAEAAP). The segment covering 173–188 (APKPAPSPRPVPPSAP) has biased composition (pro residues). Over residues 189-204 (APQAARPAAEAPPRQA) the composition is skewed to low complexity. 2 stretches are compositionally biased toward basic and acidic residues: residues 216-235 (PDRR…RPSN) and 247-273 (PRRD…DRPQ). A compositionally biased stretch (gly residues) spans 298 to 310 (RGPGGPRGPGGPR). Composition is skewed to basic and acidic residues over residues 336–350 (VDRR…RDPG) and 390–402 (RARE…RKGG). The 171-residue stretch at 492 to 662 (PRPPVVAVMG…LLQAEVLDLK (171 aa)) folds into the tr-type G domain. Positions 501–508 (GHVDHGKT) are G1. Position 501–508 (501–508 (GHVDHGKT)) interacts with GTP. The interval 526-530 (GITQH) is G2. A G3 region spans residues 548–551 (DTPG). Residues 548–552 (DTPGH) and 602–605 (NKID) each bind GTP. Residues 602–605 (NKID) form a G4 region. The interval 638–640 (SAT) is G5.

It belongs to the TRAFAC class translation factor GTPase superfamily. Classic translation factor GTPase family. IF-2 subfamily.

The protein localises to the cytoplasm. Its function is as follows. One of the essential components for the initiation of protein synthesis. Protects formylmethionyl-tRNA from spontaneous hydrolysis and promotes its binding to the 30S ribosomal subunits. Also involved in the hydrolysis of GTP during the formation of the 70S ribosomal complex. This is Translation initiation factor IF-2 from Phenylobacterium zucineum (strain HLK1).